The chain runs to 284 residues: MSADGRSGRLRFTKMHGAGNDFVVLDLRDGTPPPDAALAAQLADRHFGVGCDQILTIEAPRSEGAVAAYGIWNSDGSAARQCGNGARCVAAWLVRDGTAQGERFIIDSPMSAHAVERLDGDRYAVAMGVPQFEPAQIPLAGFAHARDEYALPVHGETVRFGAVSMGNPHAVVEVGRVDAAPVERVGALLQQNAAFPDSVNVGFVQVVDPAHVRLRVFERGVGETLACGSGACAAAVVLMQRGRVERDVQVSLPGGELRIRWPGDQEQVVMSGPAVFVFDGEWNR.

The substrate site is built by Asn-20, Gln-53, and Asn-73. The Proton donor role is filled by Cys-82. Residues 83–84 (GN), Asn-167, Asn-200, and 218–219 (ER) contribute to the substrate site. Cys-227 acts as the Proton acceptor in catalysis. Substrate is bound at residue 228–229 (GS).

The protein belongs to the diaminopimelate epimerase family. In terms of assembly, homodimer.

The protein localises to the cytoplasm. The catalysed reaction is (2S,6S)-2,6-diaminopimelate = meso-2,6-diaminopimelate. The protein operates within amino-acid biosynthesis; L-lysine biosynthesis via DAP pathway; DL-2,6-diaminopimelate from LL-2,6-diaminopimelate: step 1/1. Catalyzes the stereoinversion of LL-2,6-diaminopimelate (L,L-DAP) to meso-diaminopimelate (meso-DAP), a precursor of L-lysine and an essential component of the bacterial peptidoglycan. This Xanthomonas euvesicatoria pv. vesicatoria (strain 85-10) (Xanthomonas campestris pv. vesicatoria) protein is Diaminopimelate epimerase.